The chain runs to 468 residues: V-type proton ATPase subunit S1 (468 aa).

Residues 1-35 (MMAATAAAQVRAGTRWAPALCRMPWLPLMLVAAAA) form the signal peptide. Residues 36–228 (ATSEQQVPLV…TAVRPSRVAR (193 aa)) constitute a propeptide that is removed on maturation. Over 36-417 (ATSEQQVPLV…KKFSYASDCA (382 aa)) the chain is Lumenal. N-linked (GlcNAc...) asparagine glycans are attached at residues Asn167, Asn258, Asn271, Asn294, Asn301, Asn348, Asn355, and Asn404. An intrachain disulfide couples Cys369 to Cys416. Residues 418–438 (GFFSPGIWMGLLTSLFMLFIF) traverse the membrane as a helical segment. The Cytoplasmic portion of the chain corresponds to 439 to 468 (TYGLHMILSLKTMDRFDDHKGPTITLTQIV).

This sequence belongs to the vacuolar ATPase subunit S1 family. Accessory component of the multisubunit proton-transporting vacuolar (V)-ATPase protein pump. Interacts (via N-terminus) with ATP6AP2 (via N-terminus). Interacts with RNASEK. Interacts with TMEM106B (via C-terminus). In terms of processing, N-glycosylated.

It localises to the endoplasmic reticulum membrane. The protein localises to the endoplasmic reticulum-Golgi intermediate compartment membrane. Its subcellular location is the cytoplasmic vesicle. It is found in the secretory vesicle. The protein resides in the synaptic vesicle membrane. It localises to the clathrin-coated vesicle membrane. Its function is as follows. Accessory subunit of the proton-transporting vacuolar (V)-ATPase protein pump, which is required for luminal acidification of secretory vesicles. Guides the V-type ATPase into specialized subcellular compartments, such as neuroendocrine regulated secretory vesicles or the ruffled border of the osteoclast, thereby regulating its activity. Involved in membrane trafficking and Ca(2+)-dependent membrane fusion. May play a role in the assembly of the V-type ATPase complex. In aerobic conditions, involved in intracellular iron homeostasis, thus triggering the activity of Fe(2+) prolyl hydroxylase (PHD) enzymes, and leading to HIF1A hydroxylation and subsequent proteasomal degradation. In islets of Langerhans cells, may regulate the acidification of dense-core secretory granules. The polypeptide is V-type proton ATPase subunit S1 (ATP6AP1) (Bos taurus (Bovine)).